A 149-amino-acid polypeptide reads, in one-letter code: MKSVDLKILDARMREYLPAYATPGSAGLDLRACTEASLVIEPGQTVLVPTGLAIHIGDPRYAAMILPRSGLGHKHGIVLGNLVGLIDSDYQGQLMVSTWNRGTQPFTLDPMERLAQLVIVPVQQVAFNVVEDFDASERGAGGFGSTGRG.

Residues 68–70 (RSG), N81, 85–87 (LID), and M95 each bind substrate.

It belongs to the dUTPase family. Mg(2+) is required as a cofactor.

It catalyses the reaction dUTP + H2O = dUMP + diphosphate + H(+). Its pathway is pyrimidine metabolism; dUMP biosynthesis; dUMP from dCTP (dUTP route): step 2/2. Functionally, this enzyme is involved in nucleotide metabolism: it produces dUMP, the immediate precursor of thymidine nucleotides and it decreases the intracellular concentration of dUTP so that uracil cannot be incorporated into DNA. This is Deoxyuridine 5'-triphosphate nucleotidohydrolase from Bordetella pertussis (strain Tohama I / ATCC BAA-589 / NCTC 13251).